The chain runs to 150 residues: D-aminoacyl-tRNA deacylase (150 aa).

The short motif at 138 to 139 (GP) is the Gly-cisPro motif, important for rejection of L-amino acids element.

It belongs to the DTD family. In terms of assembly, homodimer.

It localises to the cytoplasm. The catalysed reaction is glycyl-tRNA(Ala) + H2O = tRNA(Ala) + glycine + H(+). It carries out the reaction a D-aminoacyl-tRNA + H2O = a tRNA + a D-alpha-amino acid + H(+). In terms of biological role, an aminoacyl-tRNA editing enzyme that deacylates mischarged D-aminoacyl-tRNAs. Also deacylates mischarged glycyl-tRNA(Ala), protecting cells against glycine mischarging by AlaRS. Acts via tRNA-based rather than protein-based catalysis; rejects L-amino acids rather than detecting D-amino acids in the active site. By recycling D-aminoacyl-tRNA to D-amino acids and free tRNA molecules, this enzyme counteracts the toxicity associated with the formation of D-aminoacyl-tRNA entities in vivo and helps enforce protein L-homochirality. The chain is D-aminoacyl-tRNA deacylase from Natranaerobius thermophilus (strain ATCC BAA-1301 / DSM 18059 / JW/NM-WN-LF).